Here is a 377-residue protein sequence, read N- to C-terminus: Opsin-1 (377 aa).

Residues 1–58 lie on the Extracellular side of the membrane; the sequence is MDPGPGLAALQAWAAKSPAYGAANQTVVDKVPPDMMHMIDPHWYQFPPMNPLWHALLG. A glycan (N-linked (GlcNAc...) asparagine) is linked at Asn24. Residues 59 to 79 traverse the membrane as a helical segment; that stretch reads FTIGVLGFVSISGNGMVIYIF. The Cytoplasmic portion of the chain corresponds to 80–92; it reads MSTKSLKTPSNLL. Residues 93 to 113 form a helical membrane-spanning segment; that stretch reads VVNLAFSDFLMMCAMSPAMVV. Residues 114-129 lie on the Extracellular side of the membrane; it reads NCYYETWVWGPFACEL. Cysteines 127 and 204 form a disulfide. The helical transmembrane segment at 130–150 threads the bilayer; it reads YACAGSLFGCASIWTMTMIAF. Topologically, residues 151-169 are cytoplasmic; the sequence is DRYNVIVKGIAAKPMTSNG. The helical transmembrane segment at 170–190 threads the bilayer; it reads ALLRILGIWVFSLAWTLLPFF. Residues 191-220 are Extracellular-facing; sequence GWNRYVPEGNMTACGTDYLSKSWVSRSYIL. A glycan (N-linked (GlcNAc...) asparagine) is linked at Asn200. Residues 221–241 form a helical membrane-spanning segment; the sequence is IYSVFVYFLPLLLIIYSYFFI. The Cytoplasmic segment spans residues 242–280; sequence VQAVAAHEKAMREQAKKMNVASLRSSEAANTSAECKLAK. The helical transmembrane segment at 281-301 threads the bilayer; that stretch reads VALMTISLWFMAWTPYLVINY. The Extracellular segment spans residues 302-312; it reads TGVFESAPISP. A helical transmembrane segment spans residues 313–335; it reads LATIWGSLFAKANAVYNPIVYGI. Over 336-377 the chain is Cytoplasmic; sequence SHPKYQAALYAKFPSLQCQSAPEDAGSVASGTTAVSEEKPAA. The interval 357 to 377 is disordered; the sequence is PEDAGSVASGTTAVSEEKPAA.

This sequence belongs to the G-protein coupled receptor 1 family. Opsin subfamily. In terms of tissue distribution, in the retina, expression is abundant and uniform in the anterior-posterior and oblique cells of the retinulae, with some expression in the proximal cells. There is no expression in the dorsal rim retinulae (at protein level).

It is found in the cell projection. The protein resides in the rhabdomere membrane. Functionally, visual pigments are the light-absorbing molecules that mediate vision. They consist of an apoprotein, opsin, covalently linked to cis-retinal. May play a role in photoperiodic photoreception. The sequence is that of Opsin-1 (OP1) from Manduca sexta (Tobacco hawkmoth).